A 328-amino-acid polypeptide reads, in one-letter code: UPF0194 membrane protein YPTS_1292 (328 aa).

The N-terminal stretch at 1–22 (MNRKKIIVAAVIVALLATLAYG) is a signal peptide. Coiled-coil stretches lie at residues 80–109 (YLNA…REEE) and 142–209 (AVSA…ILLA).

The protein belongs to the UPF0194 family.

It localises to the periplasm. The chain is UPF0194 membrane protein YPTS_1292 from Yersinia pseudotuberculosis serotype IB (strain PB1/+).